The chain runs to 448 residues: Homogentisate 1,2-dioxygenase (448 aa).

Histidine 303 acts as the Proton acceptor in catalysis. Fe cation contacts are provided by histidine 346 and glutamate 352. Tyrosine 361 and histidine 382 together coordinate homogentisate. Histidine 382 is a Fe cation binding site.

This sequence belongs to the homogentisate dioxygenase family. Hexamer; dimer of trimers. It depends on Fe cation as a cofactor.

It carries out the reaction homogentisate + O2 = 4-maleylacetoacetate + H(+). The protein operates within amino-acid degradation; L-phenylalanine degradation; acetoacetate and fumarate from L-phenylalanine: step 4/6. Involved in the catabolism of homogentisate (2,5-dihydroxyphenylacetate or 2,5-OH-PhAc), a central intermediate in the degradation of phenylalanine and tyrosine. Catalyzes the oxidative ring cleavage of the aromatic ring of homogentisate to yield maleylacetoacetate. The polypeptide is Homogentisate 1,2-dioxygenase (Nitrobacter hamburgensis (strain DSM 10229 / NCIMB 13809 / X14)).